Consider the following 404-residue polypeptide: Probable oxalate decarboxylase ARB_04859 (404 aa).

The signal sequence occupies residues 1–17 (MKYSAVLVAALAAIADA). Positions 74–215 (FSLSKTRMLY…NFGVPPSTFD (142 aa)) constitute a Cupin type-1 1 domain. Mn(2+) contacts are provided by H117, H119, E123, and H162. N-linked (GlcNAc...) asparagine glycans are attached at residues N226 and N244. The Cupin type-1 2 domain maps to 249–393 (FHISNAPEIQ…AINVPIEVIE (145 aa)). H296, H298, E303, and H342 together coordinate Mn(2+). N-linked (GlcNAc...) asparagine glycosylation occurs at N346. Catalysis depends on E357, which acts as the Proton donor.

It depends on Mn(2+) as a cofactor.

The protein localises to the secreted. It carries out the reaction oxalate + H(+) = formate + CO2. Its function is as follows. Converts oxalate to formate and CO(2) in an O(2)-dependent reaction. Can also catalyze minor side reactions: oxalate oxidation to produce H(2)O(2), and oxalate-dependent, H(2)O(2)-independent dye oxidations. In Arthroderma benhamiae (strain ATCC MYA-4681 / CBS 112371) (Trichophyton mentagrophytes), this protein is Probable oxalate decarboxylase ARB_04859.